Reading from the N-terminus, the 331-residue chain is PDZ and LIM domain protein 4 (331 aa).

A PDZ domain is found at 1–84 (MPHSVTLRGP…HLTLSVSRPE (84 aa)). Disordered regions lie at residues 80–99 (VSRP…KAQA), 105–152 (DSEA…GSNS), and 221–243 (AGEG…ASKL). Phosphoserine occurs at positions 112, 116, 120, and 135. Positions 254–313 (PECTRCGHGIVGTIVKARDKLYHPECFMCSDCGLNLKQRGYFFLDERLYCESHAKARVKP) constitute an LIM zinc-binding domain.

Homodimer. Interacts (via C-terminus only or via combined C-terminus and LIM domain, but not LIM domain only) with PTPN13 (via the second or fourth PDZ domains). Found in a complex with PTPN13 and TRIP6. Interacts (via PDZ domain) with ACTN1 and ACTN2 (via C-terminal SDL residues). Interacts (via PDZ domain) with TRIP6 (via the second LIM domain or via the third LIM domain plus C-terminus). Interacts (via LIM domain) with GRIA1 (via C-terminus); this interaction as well as the interaction with alpha-actinin is required for their colocalization in early endosomes. Interacts with PDLIM1. Forms (via LIM domain) a heterodimer with PDLIM3. Interacts directly with SRC (via kinase domain and to a lesser extent the SH2 domain). In terms of processing, phosphorylated on tyrosine residue(s). Can be dephosphorylated by PTPN13.

The protein resides in the cytoplasm. It is found in the cytoskeleton. It localises to the cell projection. Its subcellular location is the dendritic spine. The protein localises to the early endosome membrane. The protein resides in the recycling endosome membrane. It is found in the nucleus. It localises to the perinuclear region. Its subcellular location is the lamellipodium. The protein localises to the synapse. The protein resides in the synaptosome. In terms of biological role, suppresses SRC activation by recognizing and binding to active SRC and facilitating PTPN13-mediated dephosphorylation of SRC 'Tyr-419' leading to its inactivation. Inactivated SRC dissociates from this protein allowing the initiation of a new SRC inactivation cycle. Involved in reorganization of the actin cytoskeleton. In nonmuscle cells, binds to ACTN1 (alpha-actinin-1), increases the affinity of ACTN1 to F-actin (filamentous actin), and promotes formation of actin stress fibers. Involved in regulation of the synaptic AMPA receptor transport in dendritic spines of hippocampal pyramidal neurons directing the receptors toward an insertion at the postsynaptic membrane. Links endosomal surface-internalized GRIA1-containing AMPA receptors to the alpha-actinin/actin cytoskeleton. Increases AMPA receptor-mediated excitatory postsynaptic currents in neurons. This Bos taurus (Bovine) protein is PDZ and LIM domain protein 4 (PDLIM4).